Here is a 366-residue protein sequence, read N- to C-terminus: 8-hydroxyquercetin 8-O-methyltransferase (366 aa).

Residues 207–210, 231–232, 251–252, and K265 each bind S-adenosyl-L-methionine; these read VGGG, DL, and DM. The active-site Proton acceptor is the H269.

This sequence belongs to the class I-like SAM-binding methyltransferase superfamily. Cation-independent O-methyltransferase family. COMT subfamily. As to quaternary structure, homodimer.

It carries out the reaction 3,3',4',5,7,8-hexahydroxyflavone + S-adenosyl-L-methionine = 3,3',4',5,7-pentahydroxy-8-methoxyflavone + S-adenosyl-L-homocysteine + H(+). It catalyses the reaction 4',7,8-trihydroxyflavone + S-adenosyl-L-methionine = 4',7-dihydroxy-8-methoxyflavone + S-adenosyl-L-homocysteine + H(+). The enzyme catalyses 8-hydroxy-7-methoxyflavone + S-adenosyl-L-methionine = 7,8-dimethoxyflavone + S-adenosyl-L-homocysteine + H(+). The protein operates within flavonoid metabolism. Its function is as follows. Flavonoid 8-O-methyltransferase involved in the biosynthesis of polymethoxylated flavonoids natural products such as pebrellin, aroma compounds which contribute to the flavor of peppermint, and exhibit pharmacological activities such as anti-allergic, anti-oxidant, antibacterial, anti-proliferative, and anti-inflammatory effects. Catalyzes S-adenosylmethionine-dependent regioselective 8-O-methylation of flavonoids; active on various hydroxylated flavonoid substrates, including 7,8,3'4'-tetrahydroxy-flavone, 7,8,4'-trihydroxy-flavone and 8-hydroxy-flavone 7-methyl ether. This chain is 8-hydroxyquercetin 8-O-methyltransferase, found in Mentha piperita (Peppermint).